The chain runs to 447 residues: UPF0210 protein LAF_0976 (447 aa).

The protein belongs to the UPF0210 family. In terms of assembly, homodimer.

The chain is UPF0210 protein LAF_0976 from Limosilactobacillus fermentum (strain NBRC 3956 / LMG 18251) (Lactobacillus fermentum).